We begin with the raw amino-acid sequence, 185 residues long: MINDIKKDAQERMGKSLEALDRNLASIRTGRAHPSILDSVKVPAWGSDMPLNQVAAITVEDARTLKIVAHDKNLSAAIEKAIMTSDLGLNPSSAGTTIRVPMPALTEETRKGYTKQARGVAEDAKVAVRNVRRDALAELKKLAKAKEISEDEERRAADELQKITDKFIADVDKALEVKEADLMAV.

This sequence belongs to the RRF family.

The protein resides in the cytoplasm. In terms of biological role, responsible for the release of ribosomes from messenger RNA at the termination of protein biosynthesis. May increase the efficiency of translation by recycling ribosomes from one round of translation to another. The sequence is that of Ribosome-recycling factor from Ectopseudomonas mendocina (strain ymp) (Pseudomonas mendocina).